The following is a 112-amino-acid chain: Ferredoxin, plant-type (112 aa).

Residues 6-97 (YEVFEVLSGQ…DLTIEYFRHV (92 aa)) enclose the 2Fe-2S ferredoxin-type domain. [2Fe-2S] cluster is bound by residues C41, C46, C49, and C81.

Belongs to the 2Fe2S plant-type ferredoxin family.

Its pathway is aromatic compound metabolism; catechol degradation. Functionally, ferredoxins are iron-sulfur proteins that transfer electrons in a wide variety of metabolic reactions. The polypeptide is Ferredoxin, plant-type (xylT) (Pseudomonas putida (Arthrobacter siderocapsulatus)).